A 338-amino-acid chain; its full sequence is Glutaminase (338 aa).

Residues S80, N130, E174, N181, Y205, Y257, and V275 each contribute to the substrate site.

It belongs to the glutaminase family. As to quaternary structure, homotetramer.

It catalyses the reaction L-glutamine + H2O = L-glutamate + NH4(+). This chain is Glutaminase, found in Microcystis aeruginosa (strain NIES-843 / IAM M-2473).